The chain runs to 101 residues: Integration host factor subunit alpha (101 aa).

It belongs to the bacterial histone-like protein family. As to quaternary structure, heterodimer of an alpha and a beta chain.

Functionally, this protein is one of the two subunits of integration host factor, a specific DNA-binding protein that functions in genetic recombination as well as in transcriptional and translational control. This is Integration host factor subunit alpha from Dinoroseobacter shibae (strain DSM 16493 / NCIMB 14021 / DFL 12).